Reading from the N-terminus, the 248-residue chain is Pyridoxine 5'-phosphate synthase (248 aa).

Asparagine 12 is a binding site for 3-amino-2-oxopropyl phosphate. 14 to 15 (DH) contacts 1-deoxy-D-xylulose 5-phosphate. Arginine 23 serves as a coordination point for 3-amino-2-oxopropyl phosphate. Histidine 48 acts as the Proton acceptor in catalysis. 1-deoxy-D-xylulose 5-phosphate is bound by residues arginine 50 and histidine 55. Glutamate 75 functions as the Proton acceptor in the catalytic mechanism. Threonine 105 is a 1-deoxy-D-xylulose 5-phosphate binding site. The active-site Proton donor is histidine 196. Residues glycine 197 and 218 to 219 (GH) contribute to the 3-amino-2-oxopropyl phosphate site.

The protein belongs to the PNP synthase family. In terms of assembly, homooctamer; tetramer of dimers.

The protein resides in the cytoplasm. It carries out the reaction 3-amino-2-oxopropyl phosphate + 1-deoxy-D-xylulose 5-phosphate = pyridoxine 5'-phosphate + phosphate + 2 H2O + H(+). It participates in cofactor biosynthesis; pyridoxine 5'-phosphate biosynthesis; pyridoxine 5'-phosphate from D-erythrose 4-phosphate: step 5/5. Catalyzes the complicated ring closure reaction between the two acyclic compounds 1-deoxy-D-xylulose-5-phosphate (DXP) and 3-amino-2-oxopropyl phosphate (1-amino-acetone-3-phosphate or AAP) to form pyridoxine 5'-phosphate (PNP) and inorganic phosphate. The protein is Pyridoxine 5'-phosphate synthase of Ectopseudomonas mendocina (strain ymp) (Pseudomonas mendocina).